The following is a 434-amino-acid chain: Cullin-like protein 5 (434 aa).

The segment at 1-34 (MKRSISPDPFSSTKSPKLVHHSPDDGGAEGNPYR) is disordered.

It belongs to the cullin family.

This is Cullin-like protein 5 from Arabidopsis thaliana (Mouse-ear cress).